The primary structure comprises 815 residues: Polyribonucleotide nucleotidyltransferase (815 aa).

2 residues coordinate Mg(2+): Asp489 and Asp495. Residues Pro556–Ile615 enclose the KH domain. Residues Gly625–Lys692 enclose the S1 motif domain. Positions Ala700 to Gly815 are disordered. Gly residues predominate over residues Ala723–Glu734. Residues Gly735–Glu745 are compositionally biased toward acidic residues. The segment covering Pro775–Gly815 has biased composition (gly residues).

Belongs to the polyribonucleotide nucleotidyltransferase family. The cofactor is Mg(2+).

It is found in the cytoplasm. It carries out the reaction RNA(n+1) + phosphate = RNA(n) + a ribonucleoside 5'-diphosphate. Functionally, involved in mRNA degradation. Catalyzes the phosphorolysis of single-stranded polyribonucleotides processively in the 3'- to 5'-direction. The polypeptide is Polyribonucleotide nucleotidyltransferase (Koribacter versatilis (strain Ellin345)).